The following is a 441-amino-acid chain: 4-alpha-glucanotransferase (441 aa).

Ca(2+)-binding residues include Asp13, Asn15, Asp17, Val19, and Asp21. The active-site Nucleophile is Asp186. The active-site Proton donor is the Glu216.

This sequence belongs to the glycosyl hydrolase 13 family. Monomer. The cofactor is Ca(2+).

It localises to the cytoplasm. The catalysed reaction is Transfers a segment of a (1-&gt;4)-alpha-D-glucan to a new position in an acceptor, which may be glucose or a (1-&gt;4)-alpha-D-glucan.. In Thermotoga maritima (strain ATCC 43589 / DSM 3109 / JCM 10099 / NBRC 100826 / MSB8), this protein is 4-alpha-glucanotransferase (mgtA).